The primary structure comprises 358 residues: S-adenosylmethionine:tRNA ribosyltransferase-isomerase (358 aa).

This sequence belongs to the QueA family. Monomer.

The protein resides in the cytoplasm. The catalysed reaction is 7-aminomethyl-7-carbaguanosine(34) in tRNA + S-adenosyl-L-methionine = epoxyqueuosine(34) in tRNA + adenine + L-methionine + 2 H(+). The protein operates within tRNA modification; tRNA-queuosine biosynthesis. In terms of biological role, transfers and isomerizes the ribose moiety from AdoMet to the 7-aminomethyl group of 7-deazaguanine (preQ1-tRNA) to give epoxyqueuosine (oQ-tRNA). The chain is S-adenosylmethionine:tRNA ribosyltransferase-isomerase from Rhodopseudomonas palustris (strain BisA53).